A 600-amino-acid chain; its full sequence is Polypeptide N-acetylgalactosaminyltransferase (600 aa).

At 1 to 7 (MVRRKLR) the chain is on the cytoplasmic side. A helical; Signal-anchor for type II membrane protein transmembrane segment spans residues 8 to 28 (LLVILAGIWLVGIVVYLFKGD). Topologically, residues 29-600 (DQSEFEKRVI…KWTFSLSKNR (572 aa)) are lumenal. Intrachain disulfides connect Cys-154–Cys-382, Cys-373–Cys-451, Cys-484–Cys-501, Cys-524–Cys-541, and Cys-567–Cys-583. Positions 163–268 (LPDTSVIITF…EKWLEPLLDR (106 aa)) are catalytic subdomain A. Residues Thr-171, Asp-204, and Arg-229 each coordinate substrate. Position 252 (Asp-252) interacts with Mn(2+). A substrate-binding site is contributed by Ser-253. His-254 is a Mn(2+) binding site. The catalytic subdomain B stretch occupies residues 328-390 (PIRTPMIAGG…PCSRVGHVFR (63 aa)). Trp-359 contacts substrate. Residue His-387 coordinates Mn(2+). 3 residues coordinate substrate: Arg-390, His-393, and Tyr-395. In terms of domain architecture, Ricin B-type lectin spans 466–595 (KIPSVQDIAF…SSYTQKWTFS (130 aa)).

This sequence belongs to the glycosyltransferase 2 family. GalNAc-T subfamily. Mn(2+) is required as a cofactor. In terms of processing, O-glycosylated.

Its subcellular location is the golgi apparatus membrane. The catalysed reaction is L-seryl-[protein] + UDP-N-acetyl-alpha-D-galactosamine = a 3-O-[N-acetyl-alpha-D-galactosaminyl]-L-seryl-[protein] + UDP + H(+). It carries out the reaction L-threonyl-[protein] + UDP-N-acetyl-alpha-D-galactosamine = a 3-O-[N-acetyl-alpha-D-galactosaminyl]-L-threonyl-[protein] + UDP + H(+). Its pathway is protein modification; protein glycosylation. Its activity is regulated as follows. No change in activity by addition of up to 10% methanol or glycerol, or 5% acetonitrile. 40% reduction in activity by 10% acetonitrile or by lyophilization. Activity requires divalent cations, the best being Mn(2+) (10-20 mM), followed by Co(2+), Mg(2+) and Ca(2+). Loss of activity with Cu(2+) or in the presence of EDTA. Inhibited by UDP, but not by UMP, UTP, ADP or GDP nucleotides. No inhibition by galactose, N-acetylglucosamine or N-acetylgalactosamine sugars. Catalyzes the initial reaction in O-linked oligosaccharide biosynthesis, the transfer of an N-acetyl-D-galactosamine residue to a serine or threonine residue on the protein receptor. Has a broad substrate specificity. Acceptor peptides include Muc2, Muc5Ac, Muc1a and Muc1a', with Muc2 as the best acceptor. Acts on non-glycosylated and mono- or multi-glycosylated peptide substrates. Transfers preferably to threonine rather than serine residue. Thr-15 is the most preferred site of glycosylation in Muc2 peptide PTTTPITTTTTVTPTPTPTGTQTK having proline residues at position -1, and at positions +1 and +3, where the number represents the distance from the C-terminal and N-terminal hydroxyl amino acid, respectively. Transfer of the N-acetyl-D-galactosamine (GalNAc) is optimal with proline residues at positions -3, -1, +1 and +3, but other amino acids are tolerated, although some, such as phenylalanine, isoleucine or leucine at -1, or lysine at +3 prevent the transfer completely. Second GalNAc is transferred to Muc2 Thr-2 or Thr-13, both of which have two proline residues nearby. Up to nine sites can be glycosylated within Muc2, but eight are used simultaneously since Thr-19 and Thr-21 are not detected to be glycosylated at the same time. Glycosylation is not detected of a potential site, which is next to an already glycosylated site, but only one amino acid is needed in between two glycosylation sites. Ser-5 is the preferred glycosylation site in Muc5Ac peptide GTTPSPVPTTSTTSAP into which up to four GalNAcs can be attached. Only the threonine residues are detected as pontential glycosylation sites in Muc1a APPAHGVTSAPDTRPAPGC and Muc1a' AHGVTSAPDTR peptides. Transferase activity is restricted to UDP-GalNAc as a donor, and none of the nucleotide sugars UDP-Gal, UDP-GlcNAc, GDP-fucose, UDP-xylose, UDP-glucuronic acid or CMP-neuraminic acid are utilized as donors. The sequence is that of Polypeptide N-acetylgalactosaminyltransferase from Biomphalaria glabrata (Bloodfluke planorb).